Here is a 347-residue protein sequence, read N- to C-terminus: Tetracycline resistance determinant (347 aa).

The next 8 helical transmembrane spans lie at 3–20 (VLGAAALALFLVPLLIVA), 30–52 (SPAALALFALGAAGLAVFIPVEL), 73–95 (CSAVNFTIGVGIFGTVTTLPLFL), 108–130 (LVVIPFMLGTIASQMVSGKLIAS), 137–156 (LAIVGLGSMAGALLAMATTG), 161–183 (MWGIVLIVLWLGVGIGLSQTVIT), 204–226 (CAGQIGGSTGIAVLFSVMFAVAL), and 294–316 (GFHIMFLPGGVVLLAGFVMTWFL). Positions 321–347 (EETAPEEERPAESGAGAKNGPLPASDA) are disordered.

The protein belongs to the major facilitator superfamily. TCR/Tet family.

It is found in the cell membrane. Functionally, resistance to tetracycline by an active tetracycline efflux. This is an energy-dependent process that decreases the accumulation of the antibiotic in whole cells. This protein functions as a metal-tetracycline/H(+) antiporter. This chain is Tetracycline resistance determinant (tetB), found in Streptomyces rimosus.